The primary structure comprises 425 residues: UDP-N-acetylglucosamine 1-carboxyvinyltransferase (425 aa).

Residue 22 to 23 coordinates phosphoenolpyruvate; it reads KN. Arginine 93 is a UDP-N-acetyl-alpha-D-glucosamine binding site. The active-site Proton donor is aspartate 117. The UDP-N-acetyl-alpha-D-glucosamine site is built by aspartate 312 and methionine 334.

Belongs to the EPSP synthase family. MurA subfamily.

The protein localises to the cytoplasm. It carries out the reaction phosphoenolpyruvate + UDP-N-acetyl-alpha-D-glucosamine = UDP-N-acetyl-3-O-(1-carboxyvinyl)-alpha-D-glucosamine + phosphate. It participates in cell wall biogenesis; peptidoglycan biosynthesis. Cell wall formation. Adds enolpyruvyl to UDP-N-acetylglucosamine. This Treponema pallidum (strain Nichols) protein is UDP-N-acetylglucosamine 1-carboxyvinyltransferase.